A 160-amino-acid polypeptide reads, in one-letter code: Ribosomal RNA large subunit methyltransferase H (160 aa).

Residues Leu-76, Gly-108, and 127 to 132 contribute to the S-adenosyl-L-methionine site; that span reads LGKMTW.

Belongs to the RNA methyltransferase RlmH family. Homodimer.

It localises to the cytoplasm. The catalysed reaction is pseudouridine(1915) in 23S rRNA + S-adenosyl-L-methionine = N(3)-methylpseudouridine(1915) in 23S rRNA + S-adenosyl-L-homocysteine + H(+). In terms of biological role, specifically methylates the pseudouridine at position 1915 (m3Psi1915) in 23S rRNA. This is Ribosomal RNA large subunit methyltransferase H from Sinorhizobium fredii (strain NBRC 101917 / NGR234).